The chain runs to 406 residues: MSQPITRENFDEWMIPVYAPAPFIPVRGEGSRLWDQQGKEYIDFAGGIAVNALGHAHPELREALNEQASKFWHTGNGYTNEPVLRLAKKLIDATFADRVFFCNSGAEANEAALKLARKFAHDRYGCHKSGIVAFKNAFHGRTLFTVSAGGQPAYSQDFAPLPPDIRHAAYNDINSASALIDDSTCAVIVEPIQGEGGVVPASNAFLHGLRELCDRHNALLIFDEVQTGVGRTGELYAYMHYGVTPDLLTTAKALGGGFPVGALLATEECASVMTVGTHGTTYGGNPLASAVAGKVLDLINTPEMLNGVKQRHDWFVERLNTVNHRCGLFSEIRGLGLLIGCVLNADYAGQAKQISQEAAKAGVMVLIAGGNVVRFAPALNVSEEEVTTGLDRFAAACEHFVSRGSS.

An N6-(pyridoxal phosphate)lysine modification is found at Lys-252.

The protein belongs to the class-III pyridoxal-phosphate-dependent aminotransferase family. AstC subfamily. Requires pyridoxal 5'-phosphate as cofactor.

It catalyses the reaction N(2)-succinyl-L-ornithine + 2-oxoglutarate = N-succinyl-L-glutamate 5-semialdehyde + L-glutamate. The protein operates within amino-acid degradation; L-arginine degradation via AST pathway; L-glutamate and succinate from L-arginine: step 3/5. Its function is as follows. Catalyzes the transamination of N(2)-succinylornithine and alpha-ketoglutarate into N(2)-succinylglutamate semialdehyde and glutamate. Can also act as an acetylornithine aminotransferase. The chain is Succinylornithine transaminase from Escherichia coli O7:K1 (strain IAI39 / ExPEC).